Consider the following 500-residue polypeptide: Putative (R)-citramalate synthase CimA (500 aa).

In terms of domain architecture, Pyruvate carboxyltransferase spans leucine 9 to tyrosine 258.

It belongs to the alpha-IPM synthase/homocitrate synthase family. As to quaternary structure, homodimer.

It catalyses the reaction pyruvate + acetyl-CoA + H2O = (3R)-citramalate + CoA + H(+). The protein operates within amino-acid biosynthesis; L-isoleucine biosynthesis; 2-oxobutanoate from pyruvate: step 1/3. Catalyzes the condensation of pyruvate and acetyl-coenzyme A to form (R)-citramalate. In Methanosphaerula palustris (strain ATCC BAA-1556 / DSM 19958 / E1-9c), this protein is Putative (R)-citramalate synthase CimA.